The primary structure comprises 366 residues: Phenylalanine--tRNA ligase alpha subunit (366 aa).

Glu264 is a binding site for Mg(2+).

This sequence belongs to the class-II aminoacyl-tRNA synthetase family. Phe-tRNA synthetase alpha subunit type 1 subfamily. Tetramer of two alpha and two beta subunits. The cofactor is Mg(2+).

It localises to the cytoplasm. It carries out the reaction tRNA(Phe) + L-phenylalanine + ATP = L-phenylalanyl-tRNA(Phe) + AMP + diphosphate + H(+). The sequence is that of Phenylalanine--tRNA ligase alpha subunit from Zymomonas mobilis subsp. mobilis (strain ATCC 31821 / ZM4 / CP4).